The chain runs to 340 residues: HTH-type transcriptional repressor PurR (340 aa).

In terms of domain architecture, HTH lacI-type spans 2–56 (ATIKDVAKLVGVSTTTVSHVINKTRFVAEDTTKAVWEAIASLNYSPSAVARSLKV). Residues 4–23 (IKDVAKLVGVSTTTVSHVIN) constitute a DNA-binding region (H-T-H motif). A DNA-binding region spans residues 48–56 (SAVARSLKV). Positions 73, 188, 190, 219, and 273 each coordinate hypoxanthine.

As to quaternary structure, homodimer.

It participates in purine metabolism; purine nucleotide biosynthesis [regulation]. Its function is as follows. Is the main repressor of the genes involved in the de novo synthesis of purine nucleotides, regulating purB, purC, purEK, purF, purHD, purL, purMN and guaBA expression. PurR is allosterically activated to bind its cognate DNA by binding the purine corepressors, hypoxanthine or guanine, thereby effecting transcription repression. This chain is HTH-type transcriptional repressor PurR, found in Glaesserella parasuis serovar 5 (strain SH0165) (Haemophilus parasuis).